Here is a 426-residue protein sequence, read N- to C-terminus: Lactate racemase (426 aa).

Ni(II)-pyridinium-3,5-bisthiocarboxylate mononucleotide is bound at residue 72–75; the sequence is DHTR. Catalysis depends on proton donor/acceptor residues His-108 and His-174. Residues Lys-184 and His-200 each coordinate Ni(II)-pyridinium-3,5-bisthiocarboxylate mononucleotide. 2 residues coordinate substrate: Gln-295 and Lys-298.

This sequence belongs to the lactate racemase family. As to quaternary structure, homodimer. The cofactor is Ni(II)-pyridinium-3,5-bisthiocarboxylate mononucleotide.

It carries out the reaction (S)-lactate = (R)-lactate. Its activity is regulated as follows. Activation of the apo-enzyme requires the three accessory proteins LarB, LarE and LarC, that are involved in the biosynthesis of the nickel-pincer cofactor of LarA. In terms of biological role, catalyzes the interconversion between the D- and L-isomers of lactate. This chain is Lactate racemase, found in Thermoanaerobacterium thermosaccharolyticum (strain ATCC 7956 / DSM 571 / NCIMB 9385 / NCA 3814 / NCTC 13789 / WDCM 00135 / 2032) (Clostridium thermosaccharolyticum).